The following is a 92-amino-acid chain: PqqA binding protein (92 aa).

This sequence belongs to the PqqD family. In terms of assembly, monomer. Interacts with PqqE.

Its pathway is cofactor biosynthesis; pyrroloquinoline quinone biosynthesis. In terms of biological role, functions as a PqqA binding protein and presents PqqA to PqqE, in the pyrroloquinoline quinone (PQQ) biosynthetic pathway. This Pseudomonas aeruginosa (strain UCBPP-PA14) protein is PqqA binding protein.